A 314-amino-acid chain; its full sequence is Methionyl-tRNA formyltransferase (314 aa).

Position 111–114 (111–114) interacts with (6S)-5,6,7,8-tetrahydrofolate; it reads SLLP.

This sequence belongs to the Fmt family.

The catalysed reaction is L-methionyl-tRNA(fMet) + (6R)-10-formyltetrahydrofolate = N-formyl-L-methionyl-tRNA(fMet) + (6S)-5,6,7,8-tetrahydrofolate + H(+). Functionally, attaches a formyl group to the free amino group of methionyl-tRNA(fMet). The formyl group appears to play a dual role in the initiator identity of N-formylmethionyl-tRNA by promoting its recognition by IF2 and preventing the misappropriation of this tRNA by the elongation apparatus. The protein is Methionyl-tRNA formyltransferase of Coxiella burnetii (strain CbuG_Q212) (Coxiella burnetii (strain Q212)).